The following is a 125-amino-acid chain: Cystatin-like cysteine protease inhibitor EPIC2A (125 aa).

Positions 1-21 are cleaved as a signal peptide; the sequence is MSFLRPTLALLAVTALVTTSA. A glycan (N-linked (GlcNAc...) asparagine) is linked at Asn-45. The Secondary area of contact signature appears at 68–72; that stretch reads QVVSG.

The protein belongs to the cystatin family.

The protein localises to the secreted. Its function is as follows. Secreted effector that interacts with and inhibits host apoplastic pathogenesis-related papain-like cysteine proteases. Inhibition of host proteases by a pathogen extracellular protease inhibitor forms a specific type of defense-counterdefense mechanism between plants and microbial pathogens. This is Cystatin-like cysteine protease inhibitor EPIC2A from Phytophthora infestans (strain T30-4) (Potato late blight agent).